Consider the following 93-residue polypeptide: MSLTETIEKKLIEAFHPERLEVINESHQHTGHQPGFDGTGESHMRVRIVSSAFAGMSRVARHRAINDLLKPELDAGLHALAVEPAAPGEPTRW.

The protein belongs to the BolA/IbaG family.

This is an uncharacterized protein from Sinorhizobium sp.